The primary structure comprises 138 residues: D-ribose pyranase (138 aa).

Catalysis depends on H20, which acts as the Proton donor. Residues D28, H105, and 127–129 (YAN) each bind substrate.

It belongs to the RbsD / FucU family. RbsD subfamily. In terms of assembly, homodecamer.

It is found in the cytoplasm. The enzyme catalyses beta-D-ribopyranose = beta-D-ribofuranose. Its pathway is carbohydrate metabolism; D-ribose degradation; D-ribose 5-phosphate from beta-D-ribopyranose: step 1/2. In terms of biological role, catalyzes the interconversion of beta-pyran and beta-furan forms of D-ribose. This Psychromonas ingrahamii (strain DSM 17664 / CCUG 51855 / 37) protein is D-ribose pyranase.